The sequence spans 157 residues: MGRFIFVSFGLLVVFLSLSGTGADFDCPSGWSAYDQYCYKPFNEPQNWDDAERFCSEQAKGGHLVSIESDGEADFVAQLAQKIDKPDIYIWIGLRVQGKEQQCSSEWSDGSSIIYVNWNKGESQMCQGLTRWTNFLKWDYTDCQAKKPFVCKFPPEC.

The signal sequence occupies residues 1-23 (MGRFIFVSFGLLVVFLSLSGTGA). Intrachain disulfides connect cysteine 27-cysteine 38, cysteine 55-cysteine 151, and cysteine 126-cysteine 143. The C-type lectin domain maps to 34-152 (YDQYCYKPFN…CQAKKPFVCK (119 aa)).

This sequence belongs to the snaclec family. Heteromultimer; disulfide-linked. Expressed by the venom gland.

It is found in the secreted. Its function is as follows. Interferes with one step of hemostasis (modulation of platelet aggregation, or coagulation cascade, for example). The sequence is that of C-type lectin 9a from Crotalus adamanteus (Eastern diamondback rattlesnake).